The primary structure comprises 112 residues: Putative pterin-4-alpha-carbinolamine dehydratase (112 aa).

It belongs to the pterin-4-alpha-carbinolamine dehydratase family.

It catalyses the reaction (4aS,6R)-4a-hydroxy-L-erythro-5,6,7,8-tetrahydrobiopterin = (6R)-L-erythro-6,7-dihydrobiopterin + H2O. This chain is Putative pterin-4-alpha-carbinolamine dehydratase, found in Shewanella pealeana (strain ATCC 700345 / ANG-SQ1).